An 87-amino-acid polypeptide reads, in one-letter code: MSSDLRLTLLELVRRLNGNATIESGRLPGGRRRSPDTTTGTTGVTKTTEGPKECIDPTSRPAPEGPQEEPLHDLRPRPANRKGAAVE.

Residues 5 to 16 (LRLTLLELVRRL) are nuclear export signal. Residues 18–87 (GNATIESGRL…PANRKGAAVE (70 aa)) form a disordered region. Low complexity predominate over residues 36-48 (DTTTGTTGVTKTT).

Interacts with P and N proteins. These interactions presumably promote nuclear targeting of the X protein in infected cells. Interacts with host MAVS; this interaction inhibits MAVS-induced apoptosis. Phosphorylated.

Its subcellular location is the host nucleus. It localises to the host mitochondrion. Plays an essential role in the inhibition of host apoptosis. Mediates host mitochondria-mediated apoptosis through interaction with the mitochondrial antiviral signaling protein/MAVS and thereby promotes viral persistence in host central nervous system. Within the host nucleus, regulates viral RNA synthesis and polymerase complex assembly. This Borna disease virus 1 (BoDV-1) protein is X protein (P/X).